We begin with the raw amino-acid sequence, 354 residues long: Phospho-N-acetylmuramoyl-pentapeptide-transferase (354 aa).

The next 10 helical transmembrane spans lie at 23-43 (IAFF…IAWA), 66-86 (TPTM…LLCS), 88-108 (LTNT…FIGF), 138-158 (FALS…FIPF), 161-181 (YALF…ITAS), 193-213 (GLAS…VYLC), 227-247 (VVGV…ILGF), 257-277 (VFMG…TGVV), 282-302 (ILLI…ILQV), and 331-351 (KIIV…LTTL).

This sequence belongs to the glycosyltransferase 4 family. MraY subfamily. It depends on Mg(2+) as a cofactor.

It localises to the cell inner membrane. The catalysed reaction is UDP-N-acetyl-alpha-D-muramoyl-L-alanyl-gamma-D-glutamyl-meso-2,6-diaminopimeloyl-D-alanyl-D-alanine + di-trans,octa-cis-undecaprenyl phosphate = di-trans,octa-cis-undecaprenyl diphospho-N-acetyl-alpha-D-muramoyl-L-alanyl-D-glutamyl-meso-2,6-diaminopimeloyl-D-alanyl-D-alanine + UMP. The protein operates within cell wall biogenesis; peptidoglycan biosynthesis. Functionally, catalyzes the initial step of the lipid cycle reactions in the biosynthesis of the cell wall peptidoglycan: transfers peptidoglycan precursor phospho-MurNAc-pentapeptide from UDP-MurNAc-pentapeptide onto the lipid carrier undecaprenyl phosphate, yielding undecaprenyl-pyrophosphoryl-MurNAc-pentapeptide, known as lipid I. The protein is Phospho-N-acetylmuramoyl-pentapeptide-transferase of Campylobacter hominis (strain ATCC BAA-381 / DSM 21671 / CCUG 45161 / LMG 19568 / NCTC 13146 / CH001A).